The primary structure comprises 168 residues: Small ribosomal subunit protein bS6 (168 aa).

Residues 103–168 (RQAIAEEKEK…AAADKSDDNA (66 aa)) are disordered. Positions 106-115 (IAEEKEKKAE) are enriched in basic and acidic residues. Residues 116–125 (GQAAADAAPA) show a composition bias toward low complexity.

It belongs to the bacterial ribosomal protein bS6 family.

Its function is as follows. Binds together with bS18 to 16S ribosomal RNA. This chain is Small ribosomal subunit protein bS6, found in Desulfosudis oleivorans (strain DSM 6200 / JCM 39069 / Hxd3) (Desulfococcus oleovorans).